Reading from the N-terminus, the 242-residue chain is Glucosamine-6-phosphate deaminase (242 aa).

Residue Asp-67 is the Proton acceptor; for enolization step of the active site. Asn-136 (for ring-opening step) is an active-site residue. Catalysis depends on His-138, which acts as the Proton acceptor; for ring-opening step. Glu-143 acts as the For ring-opening step in catalysis.

This sequence belongs to the glucosamine/galactosamine-6-phosphate isomerase family. NagB subfamily.

It carries out the reaction alpha-D-glucosamine 6-phosphate + H2O = beta-D-fructose 6-phosphate + NH4(+). Its pathway is amino-sugar metabolism; N-acetylneuraminate degradation; D-fructose 6-phosphate from N-acetylneuraminate: step 5/5. Functionally, catalyzes the reversible isomerization-deamination of glucosamine 6-phosphate (GlcN6P) to form fructose 6-phosphate (Fru6P) and ammonium ion. The polypeptide is Glucosamine-6-phosphate deaminase (Clostridium perfringens (strain 13 / Type A)).